Here is a 153-residue protein sequence, read N- to C-terminus: NAD(P)H-quinone oxidoreductase subunit N (153 aa).

It belongs to the complex I NdhN subunit family. In terms of assembly, NDH-1 can be composed of about 15 different subunits; different subcomplexes with different compositions have been identified which probably have different functions.

It localises to the cellular thylakoid membrane. The catalysed reaction is a plastoquinone + NADH + (n+1) H(+)(in) = a plastoquinol + NAD(+) + n H(+)(out). It catalyses the reaction a plastoquinone + NADPH + (n+1) H(+)(in) = a plastoquinol + NADP(+) + n H(+)(out). NDH-1 shuttles electrons from an unknown electron donor, via FMN and iron-sulfur (Fe-S) centers, to quinones in the respiratory and/or the photosynthetic chain. The immediate electron acceptor for the enzyme in this species is believed to be plastoquinone. Couples the redox reaction to proton translocation, and thus conserves the redox energy in a proton gradient. Cyanobacterial NDH-1 also plays a role in inorganic carbon-concentration. The polypeptide is NAD(P)H-quinone oxidoreductase subunit N (Prochlorococcus marinus (strain MIT 9211)).